The following is a 542-amino-acid chain: Importin subunit alpha (542 aa).

M1 carries the post-translational modification N-acetylmethionine. Residues M1–K11 are compositionally biased toward polar residues. Residues M1–A65 enclose the IBB domain. The segment at M1–A77 is disordered. Positions F27–A53 are enriched in basic and acidic residues. Residues L89–P122 form an ARM 1; truncated repeat. ARM repeat units follow at residues I123 to T162, S163 to S204, T205 to D251, W252 to P288, Q289 to N330, D331 to N372, T373 to R417, and P418 to N471. An NLS binding site 1 region spans residues D209–Q335. Positions D419 to I505 are NLS binding site 2. Residues E472 to Y508 form an ARM 10; atypical repeat.

The protein belongs to the importin alpha family. Forms a complex with an importin beta subunit. In the nucleus, interacts with NUP2 which accelerate release of NLSs, NUP2 is subsequently displaced by CSE1:RanGTP which mediates re-export and recycling. Interacts with HEH2, SHE2, and STS1.

It localises to the cytoplasm. The protein resides in the perinuclear region. Functionally, functions in nuclear protein import as an adapter protein for importin beta nuclear receptors. Binds specifically and directly to substrates containing either a simple or bipartite NLS motif. Promotes docking of import substrates to the nuclear envelope. Together with importin beta KAP95, mediates nuclear import of transcription factor GCN4. Together with tethering factor STS1, targets the proteasome to the nucleus. This is Importin subunit alpha (SRP1) from Saccharomyces cerevisiae (strain ATCC 204508 / S288c) (Baker's yeast).